Reading from the N-terminus, the 394-residue chain is Putative transporter AraJ (394 aa).

The Cytoplasmic segment spans residues 1-4; it reads MKKV. Residues 5–27 form a helical membrane-spanning segment; it reads ILSLALGTFGLGMAEFGIMGVLT. Over 28–41 the chain is Periplasmic; the sequence is ELAHNVGISIPAAG. Residues 42-63 traverse the membrane as a helical segment; that stretch reads HMISYYALGVVVGAPIIALFSS. Residues 64-69 are Cytoplasmic-facing; the sequence is RYSLKH. The helical transmembrane segment at 70–89 threads the bilayer; sequence ILLFLVALCVIGNAMFTLSS. Topologically, residues 90–93 are periplasmic; sequence SYLM. The chain crosses the membrane as a helical span at residues 94–116; that stretch reads LAIGRLVSGFPHGAFFGVGAIVL. The Cytoplasmic portion of the chain corresponds to 117 to 128; the sequence is SKIIKPGKVTAA. The chain crosses the membrane as a helical span at residues 129 to 151; sequence VAGMVSGMTVANLLGIPLGTYLS. At 152–155 the chain is on the periplasmic side; the sequence is QEFS. A helical membrane pass occupies residues 156-178; that stretch reads WRYTFLLIAVFNIAVMASVYFWV. At 179–198 the chain is on the cytoplasmic side; sequence PDIRDEAKGNLREQFHFLRS. A helical membrane pass occupies residues 199–221; it reads PAPWLIFAATMFGNAGVFAWFSY. The Periplasmic portion of the chain corresponds to 222 to 235; it reads VKPYMMFISGFSET. Residues 236–255 form a helical membrane-spanning segment; the sequence is AMTFIMMLVGLGMVLGNMLS. Residues 256–261 lie on the Cytoplasmic side of the membrane; the sequence is GRISGR. The helical transmembrane segment at 262 to 284 threads the bilayer; the sequence is YSPLRIAAVTDFIIVLALLMLFF. Residues 285–293 lie on the Periplasmic side of the membrane; the sequence is CGGMKTTSL. The helical transmembrane segment at 294 to 316 threads the bilayer; the sequence is IFAFICCAGLFALSAPLQILLLQ. The Cytoplasmic segment spans residues 317–322; sequence NAKGGE. Residues 323-342 traverse the membrane as a helical segment; it reads LLGAAGGQIAFNLGSAVGAY. The Periplasmic portion of the chain corresponds to 343–351; sequence CGGMMLTLG. Residues 352 to 374 traverse the membrane as a helical segment; that stretch reads LAYNYVALPAALLSFAAMSSLLL. Over 375 to 394 the chain is Cytoplasmic; that stretch reads YGRYKRQQAADTPVLAKPLG.

It belongs to the major facilitator superfamily.

It is found in the cell inner membrane. Its function is as follows. May be involved in either the transport or processing of arabinose polymers. This Escherichia coli (strain K12) protein is Putative transporter AraJ (araJ).